We begin with the raw amino-acid sequence, 273 residues long: MLIDIAVNITDKLLAKDESSVEEVIRRCKDSKVLPIFTGLDHQTSKICINLAKKYKTVSTAGIHPTSSSRYSNIDEIVPLVNDETVVAIGECGLDYDRLEFADKVSQKRIFRSQLDLGGSCYFFHSRSCHRDFMEIVSDYRIRGVVHSFTGSIEEARELIKKGLFIGINGCSVKTLEGIEIVRSLPLESLLIETDSPYCKIRRSYAGFEYVTTDFSQQKALKKKNEPCCVVQMAEVVSNATGKDYDLVVETILDNTIGLYGDVLKKSVERWGL.

Residues Glu-91, His-125, His-147, and Asp-195 each contribute to the a divalent metal cation site.

It belongs to the metallo-dependent hydrolases superfamily. TatD-type hydrolase family. A divalent metal cation is required as a cofactor.

The protein localises to the nucleus. Its function is as follows. Putative deoxyribonuclease. The chain is Putative deoxyribonuclease TATDN1 homolog from Encephalitozoon cuniculi (strain GB-M1) (Microsporidian parasite).